We begin with the raw amino-acid sequence, 254 residues long: Flavin-dependent thymidylate synthase (254 aa).

Residues 7–237 (LRVQLIARTE…PAVFADFEIY (231 aa)) form the ThyX domain. Residues serine 71, 95–97 (RHR), and glutamine 103 each bind FAD. Residues 92 to 95 (ELIR), 103 to 107 (QLSQR), and arginine 176 each bind dUMP. A ThyX motif motif is present at residues 95–105 (RHRHFSYSQLS). Residues 192–194 (NYR) and histidine 198 contribute to the FAD site. Arginine 203 lines the dUMP pocket. The active-site Involved in ionization of N3 of dUMP, leading to its activation is the arginine 203.

It belongs to the thymidylate synthase ThyX family. Homotetramer. Requires FAD as cofactor.

The catalysed reaction is dUMP + (6R)-5,10-methylene-5,6,7,8-tetrahydrofolate + NADPH + H(+) = dTMP + (6S)-5,6,7,8-tetrahydrofolate + NADP(+). The protein operates within pyrimidine metabolism; dTTP biosynthesis. Its function is as follows. Catalyzes the reductive methylation of 2'-deoxyuridine-5'-monophosphate (dUMP) to 2'-deoxythymidine-5'-monophosphate (dTMP) while utilizing 5,10-methylenetetrahydrofolate (mTHF) as the methyl donor, and NADPH and FADH(2) as the reductant. The sequence is that of Flavin-dependent thymidylate synthase from Mycobacterium sp. (strain JLS).